The sequence spans 148 residues: Ubiquitin-conjugating enzyme E2 11 (148 aa).

One can recognise a UBC core domain in the interval 1–147 (MASKRILKEL…ARSWTQKYAM (147 aa)). Catalysis depends on cysteine 85, which acts as the Glycyl thioester intermediate.

Belongs to the ubiquitin-conjugating enzyme family. As to quaternary structure, interacts with the E3 ubiquitin-protein ligases MBR1 and MBR2. Ubiquitously expressed. Mainly in petals.

The enzyme catalyses S-ubiquitinyl-[E1 ubiquitin-activating enzyme]-L-cysteine + [E2 ubiquitin-conjugating enzyme]-L-cysteine = [E1 ubiquitin-activating enzyme]-L-cysteine + S-ubiquitinyl-[E2 ubiquitin-conjugating enzyme]-L-cysteine.. It functions in the pathway protein modification; protein ubiquitination. In terms of biological role, accepts the ubiquitin from the E1 complex and catalyzes its covalent attachment to other proteins. Mediates the selective degradation of short-lived and abnormal proteins. This is Ubiquitin-conjugating enzyme E2 11 (UBC11) from Arabidopsis thaliana (Mouse-ear cress).